The primary structure comprises 729 residues: Polyribonucleotide nucleotidyltransferase (729 aa).

2 residues coordinate Mg(2+): Asp-485 and Asp-491. One can recognise a KH domain in the interval Pro-552–Ile-611. The S1 motif domain maps to Gly-621–Lys-689. The interval Thr-710 to Glu-729 is disordered.

Belongs to the polyribonucleotide nucleotidyltransferase family. Component of the RNA degradosome, which is a multiprotein complex involved in RNA processing and mRNA degradation. The cofactor is Mg(2+).

Its subcellular location is the cytoplasm. It carries out the reaction RNA(n+1) + phosphate = RNA(n) + a ribonucleoside 5'-diphosphate. Functionally, involved in mRNA degradation. Catalyzes the phosphorolysis of single-stranded polyribonucleotides processively in the 3'- to 5'-direction. The protein is Polyribonucleotide nucleotidyltransferase of Legionella pneumophila (strain Paris).